Reading from the N-terminus, the 139-residue chain is MFEFYIAAREQKETGHPGIFSRQKHSTIIYVICLLLICLWFAGMVLVGGYARQLWVLWIVKAEVTVEAETPAFKQSTQHYFFKKQPLPVVESVEEEDDPGVAVENAPSSSEDEENTVEESEEKAGLRERVKNALNELER.

Residues 28–48 (IIYVICLLLICLWFAGMVLVG) form a helical membrane-spanning segment. The interval 93 to 139 (VEEEDDPGVAVENAPSSSEDEENTVEESEEKAGLRERVKNALNELER) is disordered. Residues 110–121 (SEDEENTVEESE) show a composition bias toward acidic residues. Residues 122-139 (EKAGLRERVKNALNELER) show a composition bias toward basic and acidic residues.

Its subcellular location is the cell membrane. In terms of biological role, part of a cryptic operon that encodes proteins involved in type II secretion pathway in other organisms, but is not expressed in strain K12 under standard laboratory conditions. May play a regulatory role under conditions of derepressed gsp gene expression. This is Putative general secretion pathway protein B from Escherichia coli (strain K12).